Here is a 379-residue protein sequence, read N- to C-terminus: Cell cycle checkpoint control protein RAD9A (379 aa).

Residue Tyr-17 is modified to Phosphotyrosine. Positions Phe-40–Glu-80 are possesses 3'-5' exonuclease activity. The interval Ser-255 to Gly-379 is sufficient for interaction with ABL1. Residues Thr-257–Gln-271 are compositionally biased toward basic and acidic residues. Disordered regions lie at residues Thr-257–Asn-289 and Ser-308–Gly-379. A phosphoserine mark is found at Ser-261, Ser-266, Ser-317, Ser-330, Ser-363, Ser-368, and Ser-375.

It belongs to the rad9 family. In terms of assembly, component of the toroidal 9-1-1 (RAD9-RAD1-HUS1) complex, composed of RAD9A, RAD1 and HUS1. The 9-1-1 complex associates with LIG1, POLB, FEN1, RAD17, HDAC1, RPA1 and RPA2. The 9-1-1 complex associates with the RAD17-RFC complex. RAD9A interacts with BCL2L1, FEN1, RAD9B, ABL1, RPA1, ATAD5 and RPA2. Interacts with DNAJC7. Interacts (when phosphorylated) with TOPBP1. Constitutively phosphorylated on serine and threonine amino acids in absence of DNA damage. Hyperphosphorylated by PRKCD and ABL1 upon DNA damage. Its phosphorylation by PRKCD may be required for the formation of the 9-1-1 complex. Phosphorylated at Ser-330 and Ser-375 by CK2, promoting interaction with TOPBP1.

It localises to the nucleus. The enzyme catalyses Exonucleolytic cleavage in the 3'- to 5'-direction to yield nucleoside 5'-phosphates.. Its function is as follows. Component of the 9-1-1 cell-cycle checkpoint response complex that plays a major role in DNA repair. The 9-1-1 complex is recruited to DNA lesion upon damage by the RAD17-replication factor C (RFC) clamp loader complex. Acts then as a sliding clamp platform on DNA for several proteins involved in long-patch base excision repair (LP-BER). The 9-1-1 complex stimulates DNA polymerase beta (POLB) activity by increasing its affinity for the 3'-OH end of the primer-template and stabilizes POLB to those sites where LP-BER proceeds; endonuclease FEN1 cleavage activity on substrates with double, nick, or gap flaps of distinct sequences and lengths; and DNA ligase I (LIG1) on long-patch base excision repair substrates. The 9-1-1 complex is necessary for the recruitment of RHNO1 to sites of double-stranded breaks (DSB) occurring during the S phase. RAD9A possesses 3'-&gt;5' double stranded DNA exonuclease activity. This chain is Cell cycle checkpoint control protein RAD9A (RAD9A), found in Macaca fascicularis (Crab-eating macaque).